The sequence spans 118 residues: Large ribosomal subunit protein mL53 (118 aa).

The disordered stretch occupies residues 99 to 118; sequence AAAASAPGADKVAPGTSTRR.

This sequence belongs to the mitochondrion-specific ribosomal protein mL53 family. As to quaternary structure, component of the mitochondrial ribosome large subunit (39S) which comprises a 16S rRNA and about 50 distinct proteins.

It localises to the mitochondrion. The sequence is that of Large ribosomal subunit protein mL53 (Mrpl53) from Mus musculus (Mouse).